We begin with the raw amino-acid sequence, 699 residues long: Glycine--tRNA ligase beta subunit (699 aa).

This sequence belongs to the class-II aminoacyl-tRNA synthetase family. Tetramer of two alpha and two beta subunits.

It is found in the cytoplasm. The catalysed reaction is tRNA(Gly) + glycine + ATP = glycyl-tRNA(Gly) + AMP + diphosphate. The chain is Glycine--tRNA ligase beta subunit from Bradyrhizobium diazoefficiens (strain JCM 10833 / BCRC 13528 / IAM 13628 / NBRC 14792 / USDA 110).